Here is a 311-residue protein sequence, read N- to C-terminus: Probable porphobilinogen deaminase (311 aa).

At Cys-237 the chain carries S-(dipyrrolylmethanemethyl)cysteine. The segment at 270 to 289 (SKTGDKNNPKSLGQSAGEEL) is disordered.

It belongs to the HMBS family. Requires dipyrromethane as cofactor.

The catalysed reaction is 4 porphobilinogen + H2O = hydroxymethylbilane + 4 NH4(+). It participates in porphyrin-containing compound metabolism; protoporphyrin-IX biosynthesis; coproporphyrinogen-III from 5-aminolevulinate: step 2/4. Functionally, tetrapolymerization of the monopyrrole PBG into the hydroxymethylbilane pre-uroporphyrinogen in several discrete steps. In Nitrosopumilus maritimus (strain SCM1), this protein is Probable porphobilinogen deaminase.